We begin with the raw amino-acid sequence, 150 residues long: Aspartate carbamoyltransferase regulatory chain (150 aa).

Residues Cys-105, Cys-110, Cys-133, and Cys-136 each contribute to the Zn(2+) site.

Belongs to the PyrI family. Contains catalytic and regulatory chains. It depends on Zn(2+) as a cofactor.

Involved in allosteric regulation of aspartate carbamoyltransferase. The chain is Aspartate carbamoyltransferase regulatory chain from Thermococcus sibiricus (strain DSM 12597 / MM 739).